A 456-amino-acid chain; its full sequence is Histidine--tRNA ligase (456 aa).

The interval 1–20 is disordered; sequence MTQSENVAAAGGAKTEPKVR.

The protein belongs to the class-II aminoacyl-tRNA synthetase family. In terms of assembly, homodimer.

It is found in the cytoplasm. It catalyses the reaction tRNA(His) + L-histidine + ATP = L-histidyl-tRNA(His) + AMP + diphosphate + H(+). This Cupriavidus necator (strain ATCC 17699 / DSM 428 / KCTC 22496 / NCIMB 10442 / H16 / Stanier 337) (Ralstonia eutropha) protein is Histidine--tRNA ligase.